Reading from the N-terminus, the 247-residue chain is Ribosomal RNA small subunit methyltransferase J (247 aa).

S-adenosyl-L-methionine is bound by residues 106–107 (RD), 122–123 (ER), and aspartate 168.

The protein belongs to the methyltransferase superfamily. RsmJ family.

It is found in the cytoplasm. It carries out the reaction guanosine(1516) in 16S rRNA + S-adenosyl-L-methionine = N(2)-methylguanosine(1516) in 16S rRNA + S-adenosyl-L-homocysteine + H(+). Specifically methylates the guanosine in position 1516 of 16S rRNA. The polypeptide is Ribosomal RNA small subunit methyltransferase J (Alcanivorax borkumensis (strain ATCC 700651 / DSM 11573 / NCIMB 13689 / SK2)).